An 889-amino-acid chain; its full sequence is Chitin synthase I (889 aa).

A glycan (N-linked (GlcNAc...) asparagine) is linked at asparagine 43. Residues 94–138 (GEYFDGYNQGHPPQEHQAYDDDGQPLIEDQHGYSDNPQHQTQTPA) form a disordered region. Residues 126–137 (YSDNPQHQTQTP) show a composition bias toward polar residues. Asparagine 199 is a glycosylation site (N-linked (GlcNAc...) asparagine). Transmembrane regions (helical) follow at residues 431–451 (SAFG…YVAL), 530–550 (RWLN…YEFF), 560–580 (LAFF…WFAI), 606–626 (ILGV…FVLS), 641–661 (MVWF…FIAV), 687–707 (TLII…IIMF), 716–736 (FIQY…YAFC), 815–835 (GVVL…LSSA), and 861–881 (IVLW…MWFL).

This sequence belongs to the chitin synthase family. Class I subfamily. In terms of tissue distribution, expressed in hyphal bodies.

It is found in the cell membrane. The catalysed reaction is [(1-&gt;4)-N-acetyl-beta-D-glucosaminyl](n) + UDP-N-acetyl-alpha-D-glucosamine = [(1-&gt;4)-N-acetyl-beta-D-glucosaminyl](n+1) + UDP + H(+). In terms of biological role, polymerizes chitin, a structural polymer of the cell wall and septum, by transferring the sugar moiety of UDP-GlcNAc to the non-reducing end of the growing chitin polymer. Contributes to the production of conidia and the ability of fungal conidia to germinate. Not involved in fungal stress tolerances. The protein is Chitin synthase I of Metarhizium acridum (strain CQMa 102).